A 120-amino-acid chain; its full sequence is uncharacterized protein (120 aa).

Residues 79 to 120 are disordered; sequence TGNEIPPEPEQEVVASPVTEQKKAEPSAPPKGSKKKKRGKKK. A compositionally biased stretch (basic residues) spans 110-120; the sequence is GSKKKKRGKKK.

This is an uncharacterized protein from Schizosaccharomyces pombe (strain 972 / ATCC 24843) (Fission yeast).